Here is a 909-residue protein sequence, read N- to C-terminus: NADH-quinone oxidoreductase subunit G (909 aa).

A 2Fe-2S ferredoxin-type domain is found at 1-83 (MATIYVDGKE…GTYISIEDEE (83 aa)). [2Fe-2S] cluster is bound by residues C34, C45, C48, and C67. In terms of domain architecture, 4Fe-4S His(Cys)3-ligated-type spans 83-122 (EAKEFRKCVVEWQMTNHPHDCPVCEEGGACHLQDMTVMTG). [4Fe-4S] cluster contacts are provided by H99, C103, C106, C112, C151, C154, C157, C201, C228, C231, C235, and C263. The region spanning 221–277 (MQFAPSICQQCSVGCNISPGERYGELRRIENRFHGSVNHYFLCDRGRFGYGYVNLPD) is the 4Fe-4S Mo/W bis-MGD-type domain.

The protein belongs to the complex I 75 kDa subunit family. As to quaternary structure, composed of 13 different subunits. Subunits NuoCD, E, F, and G constitute the peripheral sector of the complex. [2Fe-2S] cluster is required as a cofactor. [4Fe-4S] cluster serves as cofactor.

The enzyme catalyses a quinone + NADH + 5 H(+)(in) = a quinol + NAD(+) + 4 H(+)(out). Functionally, NDH-1 shuttles electrons from NADH, via FMN and iron-sulfur (Fe-S) centers, to quinones in the respiratory chain. The immediate electron acceptor for the enzyme in this species is believed to be ubiquinone. Couples the redox reaction to proton translocation (for every two electrons transferred, four hydrogen ions are translocated across the cytoplasmic membrane), and thus conserves the redox energy in a proton gradient. This chain is NADH-quinone oxidoreductase subunit G (nuoG), found in Shewanella oneidensis (strain ATCC 700550 / JCM 31522 / CIP 106686 / LMG 19005 / NCIMB 14063 / MR-1).